The sequence spans 127 residues: Large ribosomal subunit protein bL12 (127 aa).

This sequence belongs to the bacterial ribosomal protein bL12 family. As to quaternary structure, homodimer. Part of the ribosomal stalk of the 50S ribosomal subunit. Forms a multimeric L10(L12)X complex, where L10 forms an elongated spine to which 2 to 4 L12 dimers bind in a sequential fashion. Binds GTP-bound translation factors.

In terms of biological role, forms part of the ribosomal stalk which helps the ribosome interact with GTP-bound translation factors. Is thus essential for accurate translation. The polypeptide is Large ribosomal subunit protein bL12 (Phytoplasma mali (strain AT)).